The sequence spans 907 residues: Lateral signaling target protein 2 homolog (907 aa).

Disordered regions lie at residues 339–395, 463–604, 662–688, 716–756, and 770–834; these read SSDN…DPAN, LTDS…SGDA, NSSP…PDPA, EVNA…SENG, and GSGG…EERR. A compositionally biased stretch (polar residues) spans 351–361; the sequence is DISSFYTSNNR. Acidic residues predominate over residues 367-393; it reads EPNEDDDVSESNDEDEDEGEEVDEDDP. Composition is skewed to polar residues over residues 463 to 475 and 486 to 495; these read LTDS…NPSL and PVTSSHPIAQ. Residues 501-516 show a composition bias toward acidic residues; it reads SEEEGEVDEYDEDDSE. A compositionally biased stretch (basic residues) spans 525-549; the sequence is HHTKHQRRHRHHHHHHRKHYSKHRS. The segment covering 550–565 has biased composition (low complexity); that stretch reads SAAGSAGTSGTTCSAA. A compositionally biased stretch (polar residues) spans 568 to 580; that stretch reads QISSCDTSPSSGG. A compositionally biased stretch (gly residues) spans 592–602; sequence GSSGNSSGGSG. The span at 742 to 751 shows a compositional bias: polar residues; the sequence is APRTMMTTAA. The segment covering 777–793 has biased composition (low complexity); sequence GSSRSSQERSVSLSETS. Residues 816–826 show a composition bias toward polar residues; it reads PKSVQSEQSGQ. An FYVE-type zinc finger spans residues 845–905; sequence DGDAPRCMAC…VCRECFVREV (61 aa). Cysteine 851, cysteine 854, cysteine 867, cysteine 870, cysteine 875, cysteine 878, cysteine 897, and cysteine 900 together coordinate Zn(2+).

Belongs to the lst-2 family.

Functionally, negative regulator of epidermal growth factor receptor (EGFR) signaling. This is Lateral signaling target protein 2 homolog from Culex quinquefasciatus (Southern house mosquito).